The primary structure comprises 186 residues: uncharacterized protein (186 aa).

A run of 4 helical transmembrane segments spans residues 5–25 (LIACLIINNLTLIHFVGFEDI), 39–59 (IITITSLLIYSISFYLYKLFA), 62–82 (NLLFLVPIFYVILIYVLILLF), and 122–142 (GFFEGLEILILSALGILIALM).

Its subcellular location is the cell membrane. This is an uncharacterized protein from Borreliella burgdorferi (strain ATCC 35210 / DSM 4680 / CIP 102532 / B31) (Borrelia burgdorferi).